The sequence spans 480 residues: Transmembrane protein 161A (480 aa).

The first 28 residues, 1-28 (MAVLGVQLVVTLFTATLMHRLAPHCSFA), serve as a signal peptide directing secretion. The Extracellular segment spans residues 29–98 (RWLLCNGSLF…LTAVDALVLR (70 aa)). The N-linked (GlcNAc...) asparagine glycan is linked to asparagine 34. A helical transmembrane segment spans residues 99–119 (FFLEYQWFVDFAVYSVGVYLF). The Cytoplasmic portion of the chain corresponds to 120–134 (TEAYYFVLGPVQETN). A helical transmembrane segment spans residues 135 to 155 (IAVFWCLLTLAFSLKVFLMVT). Residues 156–166 (RLYFSTKEGGE) lie on the Extracellular side of the membrane. A helical membrane pass occupies residues 167–187 (RSVCLSFAFLFLLLAMLVQVV). Residues 188 to 224 (REETLELGLEPGLASMTQHLEPILKKQDWDWTLPVIK) lie on the Cytoplasmic side of the membrane. The chain crosses the membrane as a helical span at residues 225 to 245 (LAIRLGLAVLGSLLGAFLIFP). The Extracellular segment spans residues 246–263 (GLRLAQTHQDALTLSADR). A helical membrane pass occupies residues 264-284 (PLLQLLLHTSFLSPLCTLWLW). Residues 285 to 304 (TKPVARDFLYQAPTRNMTFS) lie on the Cytoplasmic side of the membrane. Residues 305–325 (VPSEGAFDSLRLWVLVALCLL) form a helical membrane-spanning segment. The Extracellular segment spans residues 326 to 370 (RLAVTRPHLQAYLCLAKARVEQLRKEAGRIEAREIQQRVVRVYCY). A helical membrane pass occupies residues 371-391 (VTVVSLQYLTPLILTLHCTLL). The Cytoplasmic segment spans residues 392-450 (LKTLGGYSWALSSTPPPLAPSQPSEALIPVDPAGDEAQQTAAQVAGILGGLLTPLFLRG). Residues 451-473 (MLAYIIWWTAACQLLSSLFGLYF) form a helical membrane-spanning segment. Residues 474-480 (HQHLAAS) are Extracellular-facing.

Belongs to the TMEM161 family.

The protein localises to the membrane. Its function is as follows. May play a role in protection against oxidative stress. Overexpression leads to reduced levels of oxidant-induced DNA damage and apoptosis. This is Transmembrane protein 161A (Tmem161a) from Mus musculus (Mouse).